We begin with the raw amino-acid sequence, 217 residues long: Imidazole glycerol phosphate synthase subunit HisH (217 aa).

The Glutamine amidotransferase type-1 domain occupies 3–217 (TIAIVDYGMG…IYRNFVHWKP (215 aa)). Cys-82 serves as the catalytic Nucleophile. Active-site residues include His-197 and Glu-199.

In terms of assembly, heterodimer of HisH and HisF.

Its subcellular location is the cytoplasm. It carries out the reaction 5-[(5-phospho-1-deoxy-D-ribulos-1-ylimino)methylamino]-1-(5-phospho-beta-D-ribosyl)imidazole-4-carboxamide + L-glutamine = D-erythro-1-(imidazol-4-yl)glycerol 3-phosphate + 5-amino-1-(5-phospho-beta-D-ribosyl)imidazole-4-carboxamide + L-glutamate + H(+). The enzyme catalyses L-glutamine + H2O = L-glutamate + NH4(+). It participates in amino-acid biosynthesis; L-histidine biosynthesis; L-histidine from 5-phospho-alpha-D-ribose 1-diphosphate: step 5/9. IGPS catalyzes the conversion of PRFAR and glutamine to IGP, AICAR and glutamate. The HisH subunit catalyzes the hydrolysis of glutamine to glutamate and ammonia as part of the synthesis of IGP and AICAR. The resulting ammonia molecule is channeled to the active site of HisF. This chain is Imidazole glycerol phosphate synthase subunit HisH, found in Ralstonia nicotianae (strain ATCC BAA-1114 / GMI1000) (Ralstonia solanacearum).